The sequence spans 874 residues: Bifunctional uridylyltransferase/uridylyl-removing enzyme (874 aa).

A uridylyltransferase region spans residues 1-332 (MPLQSPLTFS…NGGATENAEI (332 aa)). Residues 333–692 (LDADFQRRGS…ISKKATRGGT (360 aa)) form a uridylyl-removing region. One can recognise an HD domain in the interval 451-573 (VDEHSIRLLK…VRDEESLEYL (123 aa)). ACT domains lie at 693 to 777 (EVFV…RTPN) and 800 to 874 (LMEF…AVTA).

It belongs to the GlnD family. Mg(2+) is required as a cofactor.

It carries out the reaction [protein-PII]-L-tyrosine + UTP = [protein-PII]-uridylyl-L-tyrosine + diphosphate. The enzyme catalyses [protein-PII]-uridylyl-L-tyrosine + H2O = [protein-PII]-L-tyrosine + UMP + H(+). Its activity is regulated as follows. Uridylyltransferase (UTase) activity is inhibited by glutamine, while glutamine activates uridylyl-removing (UR) activity. Modifies, by uridylylation and deuridylylation, the PII regulatory proteins (GlnB and homologs), in response to the nitrogen status of the cell that GlnD senses through the glutamine level. Under low glutamine levels, catalyzes the conversion of the PII proteins and UTP to PII-UMP and PPi, while under higher glutamine levels, GlnD hydrolyzes PII-UMP to PII and UMP (deuridylylation). Thus, controls uridylylation state and activity of the PII proteins, and plays an important role in the regulation of nitrogen assimilation and metabolism. The chain is Bifunctional uridylyltransferase/uridylyl-removing enzyme from Vibrio parahaemolyticus serotype O3:K6 (strain RIMD 2210633).